The sequence spans 559 residues: TBC1 domain family member 24 (559 aa).

A 1,2-diacyl-sn-glycero-3-phospho-(1D-myo-inositol)-binding positions include K36, R40, K238, R242, and 293–297 (RLFSR). Residues 47 to 262 (SHALRGKVYQ…KVRAGQPLES (216 aa)) form the Rab-GAP TBC domain. One can recognise a TLDc domain in the interval 343-554 (EIVSVREMRD…IAAVEAWGFQ (212 aa)). 2 positions are modified to phosphoserine: S473 and S480.

In terms of assembly, interacts with ARF6. Highest expression in brain.

The protein resides in the cell membrane. The protein localises to the cytoplasm. Its subcellular location is the cytoplasmic vesicle membrane. It localises to the presynapse. May act as a GTPase-activating protein for Rab family protein(s). Involved in neuronal projections development, probably through a negative modulation of ARF6 function. Involved in the regulation of synaptic vesicle trafficking. This Homo sapiens (Human) protein is TBC1 domain family member 24 (TBC1D24).